The following is a 350-amino-acid chain: Histidinol-phosphate aminotransferase 1 (350 aa).

N6-(pyridoxal phosphate)lysine is present on Lys-210.

The protein belongs to the class-II pyridoxal-phosphate-dependent aminotransferase family. Histidinol-phosphate aminotransferase subfamily. As to quaternary structure, homodimer. Pyridoxal 5'-phosphate serves as cofactor.

It catalyses the reaction L-histidinol phosphate + 2-oxoglutarate = 3-(imidazol-4-yl)-2-oxopropyl phosphate + L-glutamate. Its pathway is amino-acid biosynthesis; L-histidine biosynthesis; L-histidine from 5-phospho-alpha-D-ribose 1-diphosphate: step 7/9. This Pseudomonas fluorescens (strain Pf0-1) protein is Histidinol-phosphate aminotransferase 1.